Consider the following 354-residue polypeptide: Type II secretion system protein K (354 aa).

Residues 1 to 7 (MSRRQRG) constitute a propeptide, leader sequence. A helical transmembrane segment spans residues 8-28 (VALLIVMLMLSLMVTIAASIT). Residues 29 to 354 (ERSGKAWQRT…QYGGYRTVNP (326 aa)) are Periplasmic-facing. The disordered stretch occupies residues 114 to 151 (NVTPNNASGNNTSGNNNAANGSSGNGNSPQPPKVGTSE). The segment covering 118–141 (NNASGNNTSGNNNAANGSSGNGNS) has biased composition (low complexity).

The protein belongs to the GSP K family. As to quaternary structure, type II secretion is composed of four main components: the outer membrane complex, the inner membrane complex, the cytoplasmic secretion ATPase and the periplasm-spanning pseudopilus. Interacts with core component OutG. In terms of processing, cleaved by prepilin peptidase.

It is found in the cell inner membrane. Component of the type II secretion system required for the energy-dependent secretion of extracellular factors such as proteases and toxins from the periplasm. Plays a role in pseudopilus assembly and seems to control its length. Interacts with the pseudopilus tip complex that is critical for the recognition and binding of secretion substrates. This Dickeya chrysanthemi (Pectobacterium chrysanthemi) protein is Type II secretion system protein K (outK).